Consider the following 104-residue polypeptide: SOSS complex subunit C (104 aa).

Position 2 is an N-acetylalanine (Ala-2). Ser-50 carries the post-translational modification Phosphoserine.

This sequence belongs to the SOSS-C family. In terms of assembly, component of the SOSS complex, composed of SOSS-B (SOSS-B1/NABP2 or SOSS-B2/NABP1), SOSS-A/INTS3 and SOSS-C/INIP. SOSS complexes containing SOSS-B1/NABP2 are more abundant than complexes containing SOSS-B2/NABP1. Interacts with INTS3; the interaction is direct.

It localises to the nucleus. Functionally, component of the SOSS complex, a multiprotein complex that functions downstream of the MRN complex to promote DNA repair and G2/M checkpoint. The SOSS complex associates with single-stranded DNA at DNA lesions and influences diverse endpoints in the cellular DNA damage response including cell-cycle checkpoint activation, recombinational repair and maintenance of genomic stability. Required for efficient homologous recombination-dependent repair of double-strand breaks (DSBs) and ATM-dependent signaling pathways. This is SOSS complex subunit C (Inip) from Mus musculus (Mouse).